Consider the following 266-residue polypeptide: U2 small nuclear ribonucleoprotein A' (266 aa).

LRR repeat units follow at residues I30 to A51, P53 to D74, D75 to P95, and K97 to S118. The 39-residue stretch at N132 to D170 folds into the LRRCT domain.

The protein belongs to the U2 small nuclear ribonucleoprotein A family. Associated with the spliceosome.

The protein localises to the nucleus. Its function is as follows. Involved in pre-mRNA splicing. The chain is U2 small nuclear ribonucleoprotein A' (LEA1) from Candida glabrata (strain ATCC 2001 / BCRC 20586 / JCM 3761 / NBRC 0622 / NRRL Y-65 / CBS 138) (Yeast).